The sequence spans 407 residues: [Pyruvate dehydrogenase (acetyl-transferring)] kinase isozyme 2, mitochondrial (407 aa).

Positions Leu135–Ser364 constitute a Histidine kinase domain. Residues Tyr215 and Tyr216 each carry the phosphotyrosine modification. Residues Glu251–Arg258, Asp290, Ser309–Thr310, and Gly325–Leu330 contribute to the ATP site. N6-succinyllysine is present on Lys376.

Belongs to the PDK/BCKDK protein kinase family. In terms of assembly, homodimer, and heterodimer with PDK1. Interacts with the pyruvate dehydrogenase complex subunit DLAT, and is part of the multimeric pyruvate dehydrogenase complex that contains multiple copies of pyruvate dehydrogenase (E1), dihydrolipoamide acetyltransferase (DLAT, E2) and lipoamide dehydrogenase (DLD, E3). As to expression, detected in heart (at protein level). Highest level of expression in heart and skeletal muscle and the lowest in spleen and lung. Liver, kidney, brain and testis levels are intermediate.

It localises to the mitochondrion matrix. It carries out the reaction L-seryl-[pyruvate dehydrogenase E1 alpha subunit] + ATP = O-phospho-L-seryl-[pyruvate dehydrogenase E1 alpha subunit] + ADP + H(+). Its activity is regulated as follows. Activity increases in response to increased acetyl-CoA and NADH levels and upon binding to the pyruvate dehydrogenase subunit DLAT. Inhibited by ADP and pyruvate; these compounds interfere with DLAT binding and thereby inhibit kinase activity. Inhibited by dichloroacetate. Inhibited by AZD7545; this compound interferes with DLAT binding and thereby inhibits kinase activity. Reactive oxygen species cause the formation of disulfide bonds, and thereby inhibit the enzyme. Functionally, kinase that plays a key role in the regulation of glucose and fatty acid metabolism and homeostasis via phosphorylation of the pyruvate dehydrogenase subunits PDHA1 and PDHA2. This inhibits pyruvate dehydrogenase activity, and thereby regulates metabolite flux through the tricarboxylic acid cycle, down-regulates aerobic respiration and inhibits the formation of acetyl-coenzyme A from pyruvate. Inhibition of pyruvate dehydrogenase decreases glucose utilization and increases fat metabolism. Mediates cellular responses to insulin. Plays an important role in maintaining normal blood glucose levels and in metabolic adaptation to nutrient availability. Via its regulation of pyruvate dehydrogenase activity, plays an important role in maintaining normal blood pH and in preventing the accumulation of ketone bodies under starvation. Plays a role in the regulation of cell proliferation and in resistance to apoptosis under oxidative stress. Plays a role in p53/TP53-mediated apoptosis. The protein is [Pyruvate dehydrogenase (acetyl-transferring)] kinase isozyme 2, mitochondrial (Pdk2) of Rattus norvegicus (Rat).